The following is a 261-amino-acid chain: Taurine import ATP-binding protein TauB (261 aa).

In terms of domain architecture, ABC transporter spans 4–233; it reads LQLERIGAQY…RYAAGESARA (230 aa). An ATP-binding site is contributed by 38–45; that stretch reads GPSGSGKT.

Belongs to the ABC transporter superfamily. Taurine importer (TC 3.A.1.17.1) family. In terms of assembly, the complex is composed of two ATP-binding proteins (TauB), two transmembrane proteins (TauC) and a solute-binding protein (TauA).

The protein resides in the cell inner membrane. The enzyme catalyses taurine(out) + ATP + H2O = taurine(in) + ADP + phosphate + H(+). In terms of biological role, part of the ABC transporter complex TauABC involved in taurine import. Responsible for energy coupling to the transport system. This Pseudomonas savastanoi pv. phaseolicola (strain 1448A / Race 6) (Pseudomonas syringae pv. phaseolicola (strain 1448A / Race 6)) protein is Taurine import ATP-binding protein TauB.